The sequence spans 337 residues: WAT1-related protein At1g11460 (337 aa).

10 consecutive transmembrane segments (helical) span residues 14 to 34 (WPPIIVMVISQVAMGSVNALV), 46 to 66 (IIGAYRIAISSFILAPIAYIL), 83 to 103 (FISGLLGASLMQFFYLLGLSY), 107 to 127 (TVACALVSLMPAITFAFALIL), 139 to 159 (AGMIKVMGTIICISGALFLTF), 188 to 208 (WLLGCLYLTIGTVLISLWILF), 220 to 240 (FSSTCLMSIFAAFQCALLSLY), 254 to 274 (FVIGVIVYAGVIGQAMSTVSV), 284 to 304 (VFVSAIMPIALISASLFDFII), and 309 to 329 (LYLGSLIGSVGTITGLYVFLW). Residues 27-157 (MGSVNALVKK…IICISGALFL (131 aa)) form the EamA 1 domain. In terms of domain architecture, EamA 2 spans 220–328 (FSSTCLMSIF…GTITGLYVFL (109 aa)).

Belongs to the drug/metabolite transporter (DMT) superfamily. Plant drug/metabolite exporter (P-DME) (TC 2.A.7.4) family.

It is found in the membrane. The protein is WAT1-related protein At1g11460 of Arabidopsis thaliana (Mouse-ear cress).